Consider the following 298-residue polypeptide: ATP synthase gamma chain (298 aa).

The protein belongs to the ATPase gamma chain family. As to quaternary structure, F-type ATPases have 2 components, CF(1) - the catalytic core - and CF(0) - the membrane proton channel. CF(1) has five subunits: alpha(3), beta(3), gamma(1), delta(1), epsilon(1). CF(0) has three main subunits: a, b and c.

It localises to the cell inner membrane. In terms of biological role, produces ATP from ADP in the presence of a proton gradient across the membrane. The gamma chain is believed to be important in regulating ATPase activity and the flow of protons through the CF(0) complex. The chain is ATP synthase gamma chain from Albidiferax ferrireducens (strain ATCC BAA-621 / DSM 15236 / T118) (Rhodoferax ferrireducens).